The following is a 157-amino-acid chain: MNHSFFQPEKQYGEDLPIFDQEWEAIAFYYDYRQSQIEELNELCQFFNISLTYTRESLEELENLYFQSIQELLLADWNLPIEEFEKMISVYLIDCVIARHEDAEWVVKPYPYKDGAYTLGFRRHRKSWHTMNACDGLYLRPKEDRPLLSLFDSLVRS.

Residues 36-63 (QIEELNELCQFFNISLTYTRESLEELEN) adopt a coiled-coil conformation.

This is an uncharacterized protein from Bacillus subtilis (strain 168).